Here is an 823-residue protein sequence, read N- to C-terminus: Zygotic DNA replication licensing factor mcm6-A (823 aa).

The segment at 159 to 186 (CLDCQTLVRDVEQQFKYTQPSICRNPVC) adopts a C4-type zinc-finger fold. The MCM domain maps to 347 to 554 (LYHNLCTSLF…TDYAIARRIV (208 aa)). ATP is bound at residue 397 to 404 (GDPSTAKS). The Arginine finger signature appears at 529–532 (SRFD). The segment at 663–710 (PDVNLDQDDEHEPEDETQEGTNGDAEVPNGVNGHVNGINGHSQESNAA) is disordered. Over residues 667-680 (LDQDDEHEPEDETQ) the composition is skewed to acidic residues. Positions 691 to 703 (NGVNGHVNGINGH) are enriched in low complexity.

Belongs to the MCM family. As to quaternary structure, component of the mcm2-7 complex (RLF-M). The complex forms a toroidal hexameric ring with the proposed subunit order mcm2-mcm6-mcm4-mcm7-mcm3-mcm5 (By simililarity). Begins to associate with zmcm3, mcm4 and mcm7 into mcm complexes at the neurula stage. May replace mmcm6 in the complex that functions during licensing of DNA replication.

Its subcellular location is the nucleus. The enzyme catalyses ATP + H2O = ADP + phosphate + H(+). In terms of biological role, acts as a component of the mcm2-7 complex (mcm complex) which is the putative replicative helicase essential for 'once per cell cycle' DNA replication initiation and elongation in eukaryotic cells. The active ATPase sites in the mcm2-7 ring are formed through the interaction surfaces of two neighboring subunits such that a critical structure of a conserved arginine finger motif is provided in trans relative to the ATP-binding site of the Walker A box of the adjacent subunit. The six ATPase active sites, however, are likely to contribute differentially to the complex helicase activity. The existence of maternal and zygotic forms of mcm3 and mcm6 suggests that specific forms of mcm2-7 complexes may be used during different stages of development. May replace mmcm6 in the mcm2-7 complex. The polypeptide is Zygotic DNA replication licensing factor mcm6-A (zmcm6-a) (Xenopus laevis (African clawed frog)).